Consider the following 181-residue polypeptide: UPF0302 protein ABC1905 (181 aa).

The protein belongs to the UPF0302 family.

The chain is UPF0302 protein ABC1905 from Shouchella clausii (strain KSM-K16) (Alkalihalobacillus clausii).